We begin with the raw amino-acid sequence, 449 residues long: NADH-quinone oxidoreductase subunit H (449 aa).

A run of 9 helical transmembrane segments spans residues 23 to 43 (WWVI…LTLF), 93 to 113 (AVYL…FSVI), 137 to 157 (VAVL…VLGG), 176 to 196 (MISY…YAGS), 209 to 229 (LWYG…MVGE), 258 to 280 (ALFF…TLFL), 300 to 320 (YWPL…FIWL), 332 to 352 (FMAF…VAVA), and 368 to 388 (LLIG…IGGA). Residues 427–442 (RSSPIASSMPQPSAAT) are compositionally biased toward polar residues. A disordered region spans residues 427–449 (RSSPIASSMPQPSAATRSAGEEI).

It belongs to the complex I subunit 1 family. As to quaternary structure, NDH-1 is composed of 14 different subunits. Subunits NuoA, H, J, K, L, M, N constitute the membrane sector of the complex.

The protein resides in the cell membrane. It carries out the reaction a quinone + NADH + 5 H(+)(in) = a quinol + NAD(+) + 4 H(+)(out). Its function is as follows. NDH-1 shuttles electrons from NADH, via FMN and iron-sulfur (Fe-S) centers, to quinones in the respiratory chain. The immediate electron acceptor for the enzyme in this species is believed to be ubiquinone. Couples the redox reaction to proton translocation (for every two electrons transferred, four hydrogen ions are translocated across the cytoplasmic membrane), and thus conserves the redox energy in a proton gradient. This subunit may bind ubiquinone. This chain is NADH-quinone oxidoreductase subunit H, found in Nocardioides sp. (strain ATCC BAA-499 / JS614).